The sequence spans 897 residues: MIHFFHTLQGEKNAGFDVLYHNMKHGQIATKELAEFVRERAAIEETYSKSMSKLAKMASNGSPLGTFAPMWDVFRVSSDKLALCHLELMRKMNDLIRDINKYSDEQVKIHRKTKEEAIGTLESVQSLQVQNGHLQKTREGYHSKCVELERLRKEGVPQKELEKAELKCKKAAESFAGSIEKFNRAGGDFEQKMSESAQKFQDIEEAHLRQMKLLIKGYSHSIEDTHVQVGQVHEEFKQNVENIGIENLIQKFTEQKGTGKERPEGPVGFEEYLSSLASENSKKSRAKAFRIPGLGKRDKEPDSTVHVYFLQNNSPLEVDDEGFVIRADVKQNDIEKEGNFYSSDSDFDDEEPKKFHIQIRPVASSNRSNSAANEQELKATVGALTLPPNRVVSVKKQLSRRSEGEGESVPQRVIAKVEVCACRLSSTASGSDALFGPPLESAFKSHSFSGREQLQNAFAASEFFSKFYSSSLENVEDSGLDSPSHQPLGVSPDPTGWAAWPSSQSQSKDSINAASQSRGGSNRPTPSPNPAPSSQSNTEWMNDIIREGPYSQIMQDSSERLALAPPRSVRSKRSSVAITRKNSDFSRSLCSSPLPDPNASTCVLYSKMLNCAPAGLSRGPSPISLSAQESWPVAAAITEYINAYFRGGEHNRCLVKITGDLTMSFPAGITRIFTANPNAPVLSFRLVNISRVDHFLPNQKLLYSDPSQSDPDTKDFWFNMQALTLHLQREAELNPQASYYNVALLKYQASSQDPSRAPLLLSAECQRSGTVTRVSLDYHCCPATAPATQLTSVQVLLPLDHSATDLQCQPPAAWNAEERRLLWKLDDLSSVSGSGTLCASWQCLEVPRGPAPSLAVQFVGSGASLSGLDVELVGSRYRMSLVKKRFATGKYMAGCSL.

Residues 1–276 (MIHFFHTLQG…VGFEEYLSSL (276 aa)) form a mediates membrane-binding region. The region spanning 2–248 (IHFFHTLQGE…NVENIGIENL (247 aa)) is the F-BAR domain. Residues 134-154 (LQKTREGYHSKCVELERLRKE) are a coiled coil. Residues 475 to 537 (VEDSGLDSPS…PNPAPSSQSN (63 aa)) form a disordered region. Polar residues predominate over residues 501-520 (PSSQSQSKDSINAASQSRGG). The region spanning 630–894 (SWPVAAAITE…RFATGKYMAG (265 aa)) is the MHD domain.

This sequence belongs to the FCHO family. May oligomerize and form homotetramer. Interacts with acvr1l/alk8; linking this receptor to clathrin-mediated endocytosis.

Its subcellular location is the membrane. It is found in the clathrin-coated pit. May function in an early step of clathrin-mediated endocytosis. May regulate Bmp signaling by regulating clathrin-mediated endocytosis of Bmp receptors. The polypeptide is F-BAR domain only protein 1 (fcho1) (Danio rerio (Zebrafish)).